We begin with the raw amino-acid sequence, 475 residues long: Ribulose bisphosphate carboxylase large chain (475 aa).

Positions 1 to 2 (MS) are excised as a propeptide. Pro3 carries the post-translational modification N-acetylproline. The residue at position 14 (Lys14) is an N6,N6,N6-trimethyllysine. 2 residues coordinate substrate: Asn123 and Thr173. Lys175 serves as the catalytic Proton acceptor. Lys177 serves as a coordination point for substrate. Mg(2+) contacts are provided by Lys201, Asp203, and Glu204. Lys201 is modified (N6-carboxylysine). The active-site Proton acceptor is His294. Arg295, His327, and Ser379 together coordinate substrate.

The protein belongs to the RuBisCO large chain family. Type I subfamily. In terms of assembly, heterohexadecamer of 8 large chains and 8 small chains; disulfide-linked. The disulfide link is formed within the large subunit homodimers. It depends on Mg(2+) as a cofactor. Post-translationally, the disulfide bond which can form in the large chain dimeric partners within the hexadecamer appears to be associated with oxidative stress and protein turnover.

The protein localises to the plastid. The protein resides in the chloroplast. It carries out the reaction 2 (2R)-3-phosphoglycerate + 2 H(+) = D-ribulose 1,5-bisphosphate + CO2 + H2O. The enzyme catalyses D-ribulose 1,5-bisphosphate + O2 = 2-phosphoglycolate + (2R)-3-phosphoglycerate + 2 H(+). In terms of biological role, ruBisCO catalyzes two reactions: the carboxylation of D-ribulose 1,5-bisphosphate, the primary event in carbon dioxide fixation, as well as the oxidative fragmentation of the pentose substrate in the photorespiration process. Both reactions occur simultaneously and in competition at the same active site. The protein is Ribulose bisphosphate carboxylase large chain of Chara vulgaris (Common stonewort).